Here is a 156-residue protein sequence, read N- to C-terminus: Translationally controlled tumor protein 2 (156 aa).

Positions 1-156 (MLVYQDILTG…LAYGLKEIKC (156 aa)) constitute a TCTP domain.

Belongs to the TCTP family. As to expression, expressed in stems, cauline leaves, minor veins of rosette leaves, roots, lateral root primordia, vascular tissues of petioles and inflorescences, base of siliques, papillae and ovules. Not detected in root meristems, anthers or seeds. Expressed in stomata, trichomes and root cortex.

It localises to the nucleus. Its subcellular location is the cytoplasm. In terms of biological role, regulates proliferation. Induces whole plant regeneration when expressed in heterologous systems. Involved in root growth and lateral root development, with a probable role in cell reprogramming. The long-distance transport of TCTP RNA and/or protein in plants may have an important role in regulation of growth and development. This is Translationally controlled tumor protein 2 from Arabidopsis thaliana (Mouse-ear cress).